Consider the following 250-residue polypeptide: MIAWLDPQDPFPPVDEALGPDSEAPGLLAASRDLSPQRLLLAYRQGIFPWYSSGQPVLWWSTDPRMVLAPPALRVSLNLRKTLRRVLRDADWEIRVDDDFLAVMRACATTPRDGQDGTWITDDIIAAYGTLHRNGMAHSVESWYRGERVGGLYGVALGRMFFGESMFAHRTDASKIALAALCAFLGNHGVAMIDCQQETDHLASLGARPIPRAEFVAHVRAATALPAISPWRFDKSVLERWAGTPAAPAG.

The protein belongs to the L/F-transferase family.

It localises to the cytoplasm. The catalysed reaction is N-terminal L-lysyl-[protein] + L-leucyl-tRNA(Leu) = N-terminal L-leucyl-L-lysyl-[protein] + tRNA(Leu) + H(+). The enzyme catalyses N-terminal L-arginyl-[protein] + L-leucyl-tRNA(Leu) = N-terminal L-leucyl-L-arginyl-[protein] + tRNA(Leu) + H(+). It carries out the reaction L-phenylalanyl-tRNA(Phe) + an N-terminal L-alpha-aminoacyl-[protein] = an N-terminal L-phenylalanyl-L-alpha-aminoacyl-[protein] + tRNA(Phe). In terms of biological role, functions in the N-end rule pathway of protein degradation where it conjugates Leu, Phe and, less efficiently, Met from aminoacyl-tRNAs to the N-termini of proteins containing an N-terminal arginine or lysine. This Cupriavidus necator (strain ATCC 17699 / DSM 428 / KCTC 22496 / NCIMB 10442 / H16 / Stanier 337) (Ralstonia eutropha) protein is Leucyl/phenylalanyl-tRNA--protein transferase.